The chain runs to 745 residues: ATP-dependent zinc metalloprotease FtsH (745 aa).

The Cytoplasmic portion of the chain corresponds to 1–11; sequence MNNRRNGLFRN. A helical transmembrane segment spans residues 12-32; sequence SLFYILMFLSLMGIIYFFFGG. Over 33–131 the chain is Extracellular; the sequence is NSGSQTQNIR…VTAKAEESSG (99 aa). Residues 132 to 152 traverse the membrane as a helical segment; the sequence is IWVTLLMYIAPVILMLFLFYM. Residues 153 to 745 are Cytoplasmic-facing; sequence MMGQAGQGGG…SSQDDTNSQA (593 aa). 227 to 234 lines the ATP pocket; the sequence is GPPGTGKT. His449 lines the Zn(2+) pocket. Residue Glu450 is part of the active site. Zn(2+) contacts are provided by His453 and Asp525. Positions 630-673 are enriched in basic and acidic residues; sequence MPEKDSNEFPSEKAATFEESKRELERREAEKHAQNQSADDKQAD. The interval 630-745 is disordered; it reads MPEKDSNEFP…SSQDDTNSQA (116 aa). A compositionally biased stretch (low complexity) spans 690 to 704; the sequence is SESDASSEVSADSSV. The segment covering 705–745 has biased composition (polar residues); sequence NSTANSATESATDSDVATSATGLPNAESATPSSQDDTNSQA.

It in the central section; belongs to the AAA ATPase family. In the C-terminal section; belongs to the peptidase M41 family. Homohexamer. It depends on Zn(2+) as a cofactor.

The protein localises to the cell membrane. Acts as a processive, ATP-dependent zinc metallopeptidase for both cytoplasmic and membrane proteins. Plays a role in the quality control of integral membrane proteins. The sequence is that of ATP-dependent zinc metalloprotease FtsH from Lactiplantibacillus plantarum (strain ATCC BAA-793 / NCIMB 8826 / WCFS1) (Lactobacillus plantarum).